Here is a 396-residue protein sequence, read N- to C-terminus: Serine/threonine-protein kinase VRK1 (396 aa).

A Protein kinase domain is found at 37–317 (WKLGSPIGQG…LLDYVEKPLY (281 aa)). Residues 43–51 (IGQGGFGCI) and Lys71 each bind ATP. Residue Lys71 forms a Glycyl lysine isopeptide (Lys-Gly) (interchain with G-Cter in SUMO2) linkage. Asp177 serves as the catalytic Proton acceptor. The tract at residues 352–396 (KPVAKKRKKEAEESVESSVEDMECSDKQTEEATQTRSKTRKRVQK) is disordered. Positions 364 to 374 (ESVESSVEDME) are enriched in acidic residues. Ser376 is modified (phosphoserine). The segment at 387 to 393 (RSKTRKR) is required for interaction with the nucleosome.

This sequence belongs to the protein kinase superfamily. CK1 Ser/Thr protein kinase family. VRK subfamily. In terms of assembly, interacts with HDAC1, KAT2B, SETDB1, KDM3A and KDM4A. Associates with the nucleosome through interactions with nucleosome DNA, histone H2A and histone H2B; the interaction with H2A and H2B is mediated by the nucleosome acidic patch, a cluster of negatively charged residues of H2A and H2B forming a cleft within the nucleosome core. Post-translationally, autophosphorylated at various serine and threonine residues. Autophosphorylation does not impair its ability to phosphorylate p53/TP53. Phosphorylation by PLK3 leads to induction of Golgi fragmentation during mitosis.

It localises to the nucleus. Its subcellular location is the cytoplasm. It is found in the cajal body. It carries out the reaction L-seryl-[protein] + ATP = O-phospho-L-seryl-[protein] + ADP + H(+). The catalysed reaction is L-threonyl-[protein] + ATP = O-phospho-L-threonyl-[protein] + ADP + H(+). Active in presence of Mn(2+), Mg(2+) and Zn(2+), but is not functional with Ca(2+) or Cu(2+). Has a higher affinity for Mn(2+) than for Mg(2+). RAN inhibits its autophosphorylation and its ability to phosphorylate histone H3. In terms of biological role, serine/threonine kinase involved in the regulation of key cellular processes including the cell cycle, nuclear condensation, transcription regulation, and DNA damage response. Controls chromatin organization and remodeling by mediating phosphorylation of histone H3 on 'Thr-4' and histone H2AX (H2aXT4ph). It also phosphorylates KAT5 in response to DNA damage, promoting KAT5 association with chromatin and histone acetyltransferase activity. Is involved in the regulation of cell cycle progression of neural progenitors, and is required for proper cortical neuronal migration. Is involved in neurite elongation and branching in motor neurons, and has an essential role in Cajal bodies assembly, acting through COIL phosphorylation and the control of coilin degradation. Involved in Golgi disassembly during the cell cycle: following phosphorylation by PLK3 during mitosis, it is required to induce Golgi fragmentation. Phosphorylates BANF1: disrupts its ability to bind DNA, reduces its binding to LEM domain-containing proteins and causes its relocalization from the nucleus to the cytoplasm. Phosphorylates TP53BP1 and p53/TP53 on 'Thr-18', preventing the interaction between p53/TP53 and MDM2. Phosphorylates ATF2 which activates its transcriptional activity. Phosphorylates JUN. The protein is Serine/threonine-protein kinase VRK1 (VRK1) of Bos taurus (Bovine).